Reading from the N-terminus, the 619-residue chain is Chaperone protein HscA homolog (619 aa).

The protein belongs to the heat shock protein 70 family.

In terms of biological role, chaperone involved in the maturation of iron-sulfur cluster-containing proteins. Has a low intrinsic ATPase activity which is markedly stimulated by HscB. This Pseudomonas aeruginosa (strain UCBPP-PA14) protein is Chaperone protein HscA homolog.